Reading from the N-terminus, the 442-residue chain is C4-dicarboxylate transport protein (442 aa).

A run of 9 helical transmembrane segments spans residues 13-33, 49-69, 81-101, 149-169, 193-213, 227-247, 312-332, 336-356, and 357-377; these read VLYFQVLTAVVIGVLLGHFYP, GIKMLIAPIIFCTVVLGIAGM, LALLYFEIVSTIALMVGLVVV, AFAKGEILQVLFIAILFGFAL, MIAIIMKFAPIGAFGAMAFTI, LMGSFYLTCLLFVFIVLGIIA, IYLTMAAVFIAQATNTPMTLL, TLLAVLLLTSKGAAGVTGSGF, and IVLAATLSAVGDVPVAGLAII.

The protein belongs to the dicarboxylate/amino acid:cation symporter (DAACS) (TC 2.A.23) family.

Its subcellular location is the cell membrane. In terms of biological role, responsible for the transport of dicarboxylates such as succinate, fumarate, and malate across the membrane. The polypeptide is C4-dicarboxylate transport protein (Polynucleobacter asymbioticus (strain DSM 18221 / CIP 109841 / QLW-P1DMWA-1) (Polynucleobacter necessarius subsp. asymbioticus)).